The primary structure comprises 384 residues: 1-deoxy-D-xylulose 5-phosphate reductoisomerase (384 aa).

NADPH contacts are provided by threonine 10, glycine 11, serine 12, isoleucine 13, lysine 37, and asparagine 124. Residue lysine 125 coordinates 1-deoxy-D-xylulose 5-phosphate. NADPH is bound at residue glutamate 126. Position 150 (aspartate 150) interacts with Mn(2+). The 1-deoxy-D-xylulose 5-phosphate site is built by serine 151, glutamate 152, serine 176, and histidine 199. Glutamate 152 contacts Mn(2+). Residue glycine 205 coordinates NADPH. 1-deoxy-D-xylulose 5-phosphate is bound by residues serine 212, asparagine 217, lysine 218, and glutamate 221. Glutamate 221 is a Mn(2+) binding site.

It belongs to the DXR family. Mg(2+) is required as a cofactor. It depends on Mn(2+) as a cofactor.

It catalyses the reaction 2-C-methyl-D-erythritol 4-phosphate + NADP(+) = 1-deoxy-D-xylulose 5-phosphate + NADPH + H(+). It functions in the pathway isoprenoid biosynthesis; isopentenyl diphosphate biosynthesis via DXP pathway; isopentenyl diphosphate from 1-deoxy-D-xylulose 5-phosphate: step 1/6. Functionally, catalyzes the NADPH-dependent rearrangement and reduction of 1-deoxy-D-xylulose-5-phosphate (DXP) to 2-C-methyl-D-erythritol 4-phosphate (MEP). In Clostridium tetani (strain Massachusetts / E88), this protein is 1-deoxy-D-xylulose 5-phosphate reductoisomerase.